The sequence spans 736 residues: Dimethylamine dehydrogenase (736 aa).

An S-6-FMN cysteine modification is found at C31. 176 to 179 lines the substrate pocket; it reads YGAH. Y181 functions as the Proton donor in the catalytic mechanism. 2 residues coordinate FMN: R229 and R329. Residues C352, C355, C358, and C371 each contribute to the [4Fe-4S] cluster site. 398-427 contacts ADP; that stretch reads DVLIVGAGPAGSECARVLMERGYTVHLVDT.

The protein in the N-terminal section; belongs to the NADH:flavin oxidoreductase/NADH oxidase family. FMN is required as a cofactor. The cofactor is [4Fe-4S] cluster.

It carries out the reaction dimethylamine + oxidized [electron-transfer flavoprotein] + H2O + H(+) = methylamine + reduced [electron-transfer flavoprotein] + formaldehyde. The sequence is that of Dimethylamine dehydrogenase (dmd) from Hyphomicrobium sp. (strain x).